An 84-amino-acid polypeptide reads, in one-letter code: uncharacterized protein (84 aa).

Basic residues-rich tracts occupy residues 1-15 (MPPH…HGHH) and 67-84 (HHGH…GHFF). Disordered regions lie at residues 1-22 (MPPH…TYTT) and 64-84 (TSHH…GHFF).

This is an uncharacterized protein from Dictyostelium discoideum (Social amoeba).